A 775-amino-acid polypeptide reads, in one-letter code: Putative late blight resistance protein homolog R1A-3 (775 aa).

Residues 16 to 39 adopt a coiled-coil conformation; the sequence is PRMNEEIVGFEDVIENLRKKLLSE. One can recognise an NB-ARC domain in the interval 17–237; that stretch reads RMNEEIVGFE…LSEMEKEVEC (221 aa). Position 50–57 (50–57) interacts with ATP; that stretch reads GMPGLGKT. Residues 711–775 enclose the HMA domain; it reads IKKMILQFDI…VGKLIDSGML (65 aa).

This sequence belongs to the disease resistance NB-LRR family.

The protein resides in the cytoplasm. Its subcellular location is the membrane. Its function is as follows. Confers resistance to late blight (Phytophthora infestans) races carrying the avirulence gene Avr1. Resistance proteins guard the plant against pathogens that contain an appropriate avirulence protein via an indirect interaction with this avirulence protein. That triggers a defense system including the hypersensitive response, which restricts the pathogen growth. The chain is Putative late blight resistance protein homolog R1A-3 (R1A-3) from Solanum demissum (Wild potato).